A 1068-amino-acid chain; its full sequence is Phosphatidylinositol 4,5-bisphosphate 3-kinase catalytic subunit alpha isoform (1068 aa).

Positions 16–105 (MPPRILVECL…QPFLKVIEPV (90 aa)) constitute a PI3K-ABD domain. One can recognise a PI3K-RBD domain in the interval 187 to 289 (KGQIIVVIWV…GRMPNLMLMA (103 aa)). In terms of domain architecture, C2 PI3K-type spans 330-487 (INSALRIKIL…DWFSSVVKFP (158 aa)). A PIK helical domain is found at 517–694 (LARDNELREN…GLLLESYCRA (178 aa)). Residues 765-1051 (RLEECRIMSS…QMNDAHHGGW (287 aa)) form the PI3K/PI4K catalytic domain. The interval 771–777 (IMSSAKR) is G-loop. The tract at residues 912-920 (GIGDRHNSN) is catalytic loop. An activation loop region spans residues 931–957 (HIDFGHFLDHKKKKFGYKRERVPFVLT).

The protein belongs to the PI3/PI4-kinase family. In terms of assembly, heterodimer of a catalytic subunit PIK3CA and a p85 regulatory subunit (PIK3R1, PIK3R2 or PIK3R3). Interacts with IRS1 in nuclear extracts. Interacts with RUFY3. Interacts with RASD2. Interacts with APPL1. Interacts with HRAS and KRAS. Interaction with HRAS/KRAS is required for PI3K pathway signaling and cell proliferation stimulated by EGF and FGF2. Interacts with FAM83B; activates the PI3K/AKT signaling cascade.

The catalysed reaction is L-seryl-[protein] + ATP = O-phospho-L-seryl-[protein] + ADP + H(+). It catalyses the reaction a 1,2-diacyl-sn-glycero-3-phospho-(1D-myo-inositol) + ATP = a 1,2-diacyl-sn-glycero-3-phospho-(1D-myo-inositol-3-phosphate) + ADP + H(+). The enzyme catalyses a 1,2-diacyl-sn-glycero-3-phospho-(1D-myo-inositol-4,5-bisphosphate) + ATP = a 1,2-diacyl-sn-glycero-3-phospho-(1D-myo-inositol-3,4,5-trisphosphate) + ADP + H(+). It carries out the reaction 1,2-dioctanoyl-sn-glycero-3-phospho-(1D-myo-inositol-4,5-bisphosphate) + ATP = 1,2-dioctanoyl-sn-glycero-3-phospho-(1D-myo-inositol-3,4,5-trisphosphate) + ADP + H(+). The catalysed reaction is 1-octadecanoyl-2-(5Z,8Z,11Z,14Z)-eicosatetraenoyl-sn-glycero-3-phospho-1D-myo-inositol 4,5-bisphosphate + ATP = 1-octadecanoyl-2-(5Z,8Z,11Z,14Z-eicosatetraenoyl)-sn-glycero-3-phospho-(1D-myo-inositol 3,4,5-triphosphate) + ADP + H(+). It functions in the pathway phospholipid metabolism; phosphatidylinositol phosphate biosynthesis. Functionally, phosphoinositide-3-kinase (PI3K) phosphorylates phosphatidylinositol (PI) and its phosphorylated derivatives at position 3 of the inositol ring to produce 3-phosphoinositides. Uses ATP and PtdIns(4,5)P2 (phosphatidylinositol 4,5-bisphosphate) to generate phosphatidylinositol 3,4,5-trisphosphate (PIP3). PIP3 plays a key role by recruiting PH domain-containing proteins to the membrane, including AKT1 and PDPK1, activating signaling cascades involved in cell growth, survival, proliferation, motility and morphology. Participates in cellular signaling in response to various growth factors. Involved in the activation of AKT1 upon stimulation by receptor tyrosine kinases ligands such as EGF, insulin, IGF1, VEGFA and PDGF. Involved in signaling via insulin-receptor substrate (IRS) proteins. Essential in endothelial cell migration during vascular development through VEGFA signaling, possibly by regulating RhoA activity. Required for lymphatic vasculature development, possibly by binding to RAS and by activation by EGF and FGF2, but not by PDGF. Regulates invadopodia formation through the PDPK1-AKT1 pathway. Participates in cardiomyogenesis in embryonic stem cells through a AKT1 pathway. Participates in vasculogenesis in embryonic stem cells through PDK1 and protein kinase C pathway. In addition to its lipid kinase activity, it displays a serine-protein kinase activity that results in the autophosphorylation of the p85alpha regulatory subunit as well as phosphorylation of other proteins such as 4EBP1, H-Ras, the IL-3 beta c receptor and possibly others. Plays a role in the positive regulation of phagocytosis and pinocytosis. This is Phosphatidylinositol 4,5-bisphosphate 3-kinase catalytic subunit alpha isoform (PIK3CA) from Bos taurus (Bovine).